A 283-amino-acid chain; its full sequence is GTP cyclohydrolase MptA (283 aa).

Belongs to the GTP cyclohydrolase IV family. Homodimer. Fe(2+) serves as cofactor.

The catalysed reaction is GTP + H2O = 7,8-dihydroneopterin 2',3'-cyclic phosphate + formate + diphosphate + H(+). It functions in the pathway cofactor biosynthesis; 5,6,7,8-tetrahydromethanopterin biosynthesis. In terms of biological role, converts GTP to 7,8-dihydro-D-neopterin 2',3'-cyclic phosphate, the first intermediate in the biosynthesis of coenzyme methanopterin. The chain is GTP cyclohydrolase MptA from Aeropyrum pernix (strain ATCC 700893 / DSM 11879 / JCM 9820 / NBRC 100138 / K1).